Reading from the N-terminus, the 613-residue chain is Na(+)/H(+) antiporter NhaA 1 (613 aa).

The interval 1–24 is disordered; that stretch reads MTEASARTIGPLPSRFSRDPKTPR. A na(+)/H(+) antiporter NhaA region spans residues 1-408; the sequence is MTEASARTIG…DPARQDEARV (408 aa). The next 11 helical transmembrane spans lie at 29 to 49, 81 to 101, 110 to 130, 138 to 158, 168 to 188, 191 to 211, 231 to 251, 300 to 320, 337 to 357, 377 to 397, and 408 to 428; these read AAAA…NSPW, GLMA…FVIG, AVPV…FLTF, QAWG…LAVI, IFLL…IALF, DDLK…LAMV, IALY…AVLI, AVGP…NAGV, WGIV…ATAL, GGAA…DVAI, and VGVL…FRIT. A Thioredoxin domain is found at 409-613; it reads GVLIASVLAF…SLIRALEAGR (205 aa).

This sequence in the N-terminal section; belongs to the NhaA Na(+)/H(+) (TC 2.A.33) antiporter family.

Its subcellular location is the cell membrane. The catalysed reaction is Na(+)(in) + 2 H(+)(out) = Na(+)(out) + 2 H(+)(in). In terms of biological role, na(+)/H(+) antiporter that extrudes sodium in exchange for external protons. This Mycobacterium sp. (strain JLS) protein is Na(+)/H(+) antiporter NhaA 1.